A 497-amino-acid chain; its full sequence is ADP-dependent glucokinase (497 aa).

The first 22 residues, 1-22, serve as a signal peptide directing secretion; that stretch reads MALWRGSAYAGFLALAVGCVFL. The ADPK domain maps to 52–497; sequence SPEGRLAAAW…LFYSEVHPHL (446 aa). Mg(2+)-binding residues include E297, E328, and D481. D481 functions as the Proton acceptor in the catalytic mechanism.

The protein belongs to the ADP-dependent glucokinase family. As to quaternary structure, monomer. Mg(2+) serves as cofactor.

It localises to the secreted. The enzyme catalyses D-glucose + ADP = D-glucose 6-phosphate + AMP + H(+). It functions in the pathway carbohydrate degradation; glycolysis. Functionally, catalyzes the phosphorylation of D-glucose to D-glucose 6-phosphate using ADP as the phosphate donor. GDP and CDP can replace ADP, but with reduced efficiency. This is ADP-dependent glucokinase (ADPGK) from Bos taurus (Bovine).